The chain runs to 276 residues: Large ribosomal subunit protein uL2 (276 aa).

The disordered stretch occupies residues 219–268; the sequence is TVRGSVMNPNDHPHGGGEGRQPVGRKSPMTPWGKPALGLKTRNKKAKSSK.

The protein belongs to the universal ribosomal protein uL2 family. In terms of assembly, part of the 50S ribosomal subunit. Forms a bridge to the 30S subunit in the 70S ribosome.

Functionally, one of the primary rRNA binding proteins. Required for association of the 30S and 50S subunits to form the 70S ribosome, for tRNA binding and peptide bond formation. It has been suggested to have peptidyltransferase activity; this is somewhat controversial. Makes several contacts with the 16S rRNA in the 70S ribosome. This Lactococcus lactis subsp. cremoris (strain MG1363) protein is Large ribosomal subunit protein uL2.